Here is a 431-residue protein sequence, read N- to C-terminus: 3-deoxy-D-manno-octulosonic acid transferase (431 aa).

A helical; Signal-anchor transmembrane segment spans residues 5 to 27 (WLTSRLYDAFLVCAFFVSAPRIF). Catalysis depends on E67, which acts as the Proton acceptor. CMP is bound by residues 275–276 (PR), 315–317 (MGV), and 342–345 (NLLE).

It belongs to the glycosyltransferase group 1 family. Glycosyltransferase 30 subfamily.

It is found in the cell inner membrane. The enzyme catalyses lipid IVA (E. coli) + CMP-3-deoxy-beta-D-manno-octulosonate = alpha-Kdo-(2-&gt;6)-lipid IVA (E. coli) + CMP + H(+). It carries out the reaction alpha-Kdo-(2-&gt;6)-lipid IVA (E. coli) + CMP-3-deoxy-beta-D-manno-octulosonate = alpha-Kdo-(2-&gt;4)-alpha-Kdo-(2-&gt;6)-lipid IVA (E. coli) + CMP + H(+). It catalyses the reaction alpha-Kdo-(2-&gt;4)-alpha-Kdo-(2-&gt;6)-lipid IVA (E. coli) + CMP-3-deoxy-beta-D-manno-octulosonate = alpha-Kdo-(2-&gt;8)-alpha-Kdo-(2-&gt;4)-alpha-Kdo-(2-&gt;6)-lipid IVA (E. coli) + CMP + H(+). It functions in the pathway bacterial outer membrane biogenesis; LPS core biosynthesis. In terms of biological role, involved in lipopolysaccharide (LPS) biosynthesis. Catalyzes the transfer of three 3-deoxy-D-manno-octulosonate (Kdo) residues from CMP-Kdo to lipid IV(A), the tetraacyldisaccharide-1,4'-bisphosphate precursor of lipid A. Thus generates the genus-specific LPS epitope of Chlamydia, composed of the trisaccharide alpha-Kdo-(2-&gt;8)-alpha-Kdo-(2-&gt;4)-alpha-Kdo. This is 3-deoxy-D-manno-octulosonic acid transferase (waaA) from Chlamydia trachomatis serovar D (strain ATCC VR-885 / DSM 19411 / UW-3/Cx).